Reading from the N-terminus, the 467-residue chain is Uronate isomerase (467 aa).

It belongs to the metallo-dependent hydrolases superfamily. Uronate isomerase family.

The catalysed reaction is D-glucuronate = D-fructuronate. It carries out the reaction aldehydo-D-galacturonate = keto-D-tagaturonate. It participates in carbohydrate metabolism; pentose and glucuronate interconversion. In Staphylococcus haemolyticus (strain JCSC1435), this protein is Uronate isomerase.